The sequence spans 586 residues: Arginine--tRNA ligase (586 aa).

A 'HIGH' region motif is present at residues 133–143; that stretch reads ANPTGPLNIVS.

The protein belongs to the class-I aminoacyl-tRNA synthetase family. In terms of assembly, monomer.

It localises to the cytoplasm. It carries out the reaction tRNA(Arg) + L-arginine + ATP = L-arginyl-tRNA(Arg) + AMP + diphosphate. This is Arginine--tRNA ligase from Leptospira borgpetersenii serovar Hardjo-bovis (strain JB197).